A 156-amino-acid polypeptide reads, in one-letter code: Small ribosomal subunit protein uS7 (156 aa).

This sequence belongs to the universal ribosomal protein uS7 family. In terms of assembly, part of the 30S ribosomal subunit. Contacts proteins S9 and S11.

In terms of biological role, one of the primary rRNA binding proteins, it binds directly to 16S rRNA where it nucleates assembly of the head domain of the 30S subunit. Is located at the subunit interface close to the decoding center, probably blocks exit of the E-site tRNA. In Methylobacterium radiotolerans (strain ATCC 27329 / DSM 1819 / JCM 2831 / NBRC 15690 / NCIMB 10815 / 0-1), this protein is Small ribosomal subunit protein uS7.